A 490-amino-acid chain; its full sequence is Protein nucleotidyltransferase YdiU (490 aa).

Glycine 89, glycine 91, arginine 92, lysine 112, aspartate 124, glycine 125, arginine 175, and arginine 182 together coordinate ATP. The active-site Proton acceptor is aspartate 251. 2 residues coordinate Mg(2+): asparagine 252 and aspartate 261. Aspartate 261 contacts ATP.

This sequence belongs to the SELO family. It depends on Mg(2+) as a cofactor. The cofactor is Mn(2+).

It catalyses the reaction L-seryl-[protein] + ATP = 3-O-(5'-adenylyl)-L-seryl-[protein] + diphosphate. The catalysed reaction is L-threonyl-[protein] + ATP = 3-O-(5'-adenylyl)-L-threonyl-[protein] + diphosphate. The enzyme catalyses L-tyrosyl-[protein] + ATP = O-(5'-adenylyl)-L-tyrosyl-[protein] + diphosphate. It carries out the reaction L-histidyl-[protein] + UTP = N(tele)-(5'-uridylyl)-L-histidyl-[protein] + diphosphate. It catalyses the reaction L-seryl-[protein] + UTP = O-(5'-uridylyl)-L-seryl-[protein] + diphosphate. The catalysed reaction is L-tyrosyl-[protein] + UTP = O-(5'-uridylyl)-L-tyrosyl-[protein] + diphosphate. Its function is as follows. Nucleotidyltransferase involved in the post-translational modification of proteins. It can catalyze the addition of adenosine monophosphate (AMP) or uridine monophosphate (UMP) to a protein, resulting in modifications known as AMPylation and UMPylation. This chain is Protein nucleotidyltransferase YdiU, found in Vibrio vulnificus (strain YJ016).